Here is a 150-residue protein sequence, read N- to C-terminus: MSIWNKPISLEILNATSKNTLIEHLNIIYTEVTENSISATMPVCHFTHQPLGMLHGGASVVLAETLGSVAANFSVGEDAYCVGLDINANHVRAMREGLVTGTAVPLHIGVSTQVWQIEIKDEQGRLVCISRLTVAVKRSRPNQAKPVAEV.

This sequence belongs to the thioesterase PaaI family.

This chain is Putative esterase VC_A0580, found in Vibrio cholerae serotype O1 (strain ATCC 39315 / El Tor Inaba N16961).